A 477-amino-acid chain; its full sequence is PTS system glucose-specific EIICB component (477 aa).

The Cytoplasmic portion of the chain corresponds to Met-1 to Lys-14. Residues Met-1–Asp-388 enclose the PTS EIIC type-1 domain. Residues Ser-15 to Ala-35 traverse the membrane as a helical segment. Topologically, residues Asn-36–Glu-50 are periplasmic. The helical transmembrane segment at Ala-51 to Phe-71 threads the bilayer. Residues Thr-72–Ala-79 are Cytoplasmic-facing. A helical transmembrane segment spans residues Leu-80 to Val-100. Topologically, residues Leu-101–Lys-111 are periplasmic. The helical transmembrane segment at His-112–Phe-132 threads the bilayer. The Cytoplasmic segment spans residues Asn-133–Arg-151. Residues Phe-152–Trp-172 traverse the membrane as a helical segment. Residues Pro-173–Asn-190 are Periplasmic-facing. A helical transmembrane segment spans residues Pro-191–His-211. Residues His-212–Lys-249 are Cytoplasmic-facing. Residues Leu-250 to His-270 traverse the membrane as a helical segment. The Periplasmic portion of the chain corresponds to Ser-271 to Lys-279. Residues Val-280–Ile-300 form a helical membrane-spanning segment. Residues Glu-301–Pro-309 are Cytoplasmic-facing. The chain crosses the membrane as a helical span at residues Ile-310–Gly-330. Topologically, residues Met-331–Trp-355 are periplasmic. The chain crosses the membrane as a helical span at residues Leu-356–Ile-376. The Cytoplasmic portion of the chain corresponds to Lys-377 to His-477. Residues Ser-399 to His-477 form the PTS EIIB type-1 domain. The Phosphocysteinsyse intermediate; for EIIB activity role is filled by Cys-421. Cys-421 carries the phosphocysteine modification.

It is found in the cell inner membrane. The enzyme catalyses N(pros)-phospho-L-histidyl-[protein] + D-glucose(out) = D-glucose 6-phosphate(in) + L-histidyl-[protein]. Functionally, the phosphoenolpyruvate-dependent sugar phosphotransferase system (sugar PTS), a major carbohydrate active transport system, catalyzes the phosphorylation of incoming sugar substrates concomitantly with their translocation across the cell membrane. The enzyme II complex composed of PtsG and Crr is involved in glucose transport. Also functions as a chemoreceptor monitoring the environment for changes in sugar concentration. The chain is PTS system glucose-specific EIICB component (ptsG) from Escherichia coli O6:H1 (strain CFT073 / ATCC 700928 / UPEC).